We begin with the raw amino-acid sequence, 226 residues long: 2-C-methyl-D-erythritol 4-phosphate cytidylyltransferase (226 aa).

It belongs to the IspD/TarI cytidylyltransferase family. IspD subfamily.

It catalyses the reaction 2-C-methyl-D-erythritol 4-phosphate + CTP + H(+) = 4-CDP-2-C-methyl-D-erythritol + diphosphate. The protein operates within isoprenoid biosynthesis; isopentenyl diphosphate biosynthesis via DXP pathway; isopentenyl diphosphate from 1-deoxy-D-xylulose 5-phosphate: step 2/6. In terms of biological role, catalyzes the formation of 4-diphosphocytidyl-2-C-methyl-D-erythritol from CTP and 2-C-methyl-D-erythritol 4-phosphate (MEP). This Thermosipho africanus (strain TCF52B) protein is 2-C-methyl-D-erythritol 4-phosphate cytidylyltransferase.